The chain runs to 838 residues: MAGILTKIFGDGNQKQLKRLEKQVDLIEQLEPEMEKLEDIDFKNKTEEFKTRYKNGESLNDLLIEVYALVREASKRVLGMRPFRTQLLGAIALHEGNISEMKTGEGKTLASTMPAYLNALTDEGVHIITVNDYLAERDAKDNGLLFDFLGITVGFNHNGLSKDEKREAYLADITYGTNNEFGFDYLRDNMVLYKEQMVQRPLNFAIIDEVDSILIDEARTPLIISGSAKKSAALYQQADGFVRTLNKENDYTYDEKTKGVQLTEEGINKAENYFSIENLFDLDHVSLTHHINQALKAHVSMHRDTDYMVEEDEVVIIDQFTGRKMKGRRYSDGLHQAIEAKEGLQIQNESMTLASITFQNYFRMYNKLSGMTGTAKTEEEEFRNIYNMDVIAIPTNLPIAREDRADLIYKSMEGKFRAVVENIKERYENGQPVLVGTVAVETSELISKLLKRAGVKHEVLNAKNHFREADIIEHAGQRGSVTIATNMAGRGTDIKLGDGVKELGGLAVIGTERHESRRIDNQLRGRSGRQGDPGISQFFLSMEDELMRRFGSDNLKSMMERLGMDDSQPIESKMVSRAVESAQKRVEGNNFDARKTILSYDDVLREQREIIYKQRFEVIDDNSDLREIIENMIQSSIERVVATHTQDSDEENWNLEAIIEYSNGNLFDPDTIHTDDLKDKEANEITELLMKKVKEKYDAKEQELTPEQFREFEKVILLRTVDSKWMDHIDQMDQLRQGIHLRAYGQNDPLREYQMEGFSMFEEMVANIEDEVAKYIMKAQIRENLQRQEVVKNTQAVSGGEDSGKKKTKKPVVKSNTVKRNDPCPCGSGKKYKNCHGQ.

ATP contacts are provided by residues glutamine 86, glycine 104–threonine 108, and aspartate 493. The tract at residues asparagine 793–glutamine 838 is disordered. Residues cysteine 824, cysteine 826, cysteine 835, and histidine 836 each coordinate Zn(2+).

The protein belongs to the SecA family. In terms of assembly, monomer and homodimer. Part of the essential Sec protein translocation apparatus which comprises SecA, SecYEG and auxiliary proteins SecDF. Other proteins may also be involved. The cofactor is Zn(2+).

It localises to the cell membrane. Its subcellular location is the cytoplasm. The catalysed reaction is ATP + H2O + cellular proteinSide 1 = ADP + phosphate + cellular proteinSide 2.. In terms of biological role, part of the Sec protein translocase complex. Interacts with the SecYEG preprotein conducting channel. Has a central role in coupling the hydrolysis of ATP to the transfer of proteins into and across the cell membrane, serving as an ATP-driven molecular motor driving the stepwise translocation of polypeptide chains across the membrane. This is Protein translocase subunit SecA from Oceanobacillus iheyensis (strain DSM 14371 / CIP 107618 / JCM 11309 / KCTC 3954 / HTE831).